The sequence spans 281 residues: tRNA dimethylallyltransferase (281 aa).

Interaction with substrate tRNA regions lie at residues 13 to 16 (DSAQ) and 133 to 137 (QRITR).

This sequence belongs to the IPP transferase family. In terms of assembly, monomer. Requires Mg(2+) as cofactor.

The catalysed reaction is adenosine(37) in tRNA + dimethylallyl diphosphate = N(6)-dimethylallyladenosine(37) in tRNA + diphosphate. Catalyzes the transfer of a dimethylallyl group onto the adenine at position 37 in tRNAs that read codons beginning with uridine, leading to the formation of N6-(dimethylallyl)adenosine (i(6)A). The protein is tRNA dimethylallyltransferase of Novosphingobium aromaticivorans (strain ATCC 700278 / DSM 12444 / CCUG 56034 / CIP 105152 / NBRC 16084 / F199).